A 173-amino-acid chain; its full sequence is Regulatory protein RecX (173 aa).

It belongs to the RecX family.

It is found in the cytoplasm. Its function is as follows. Modulates RecA activity. The sequence is that of Regulatory protein RecX from Mycobacterium avium (strain 104).